A 509-amino-acid polypeptide reads, in one-letter code: Histidine--tRNA ligase, cytoplasmic (509 aa).

Residue alanine 2 is modified to N-acetylalanine. One can recognise a WHEP-TRS domain in the interval 3-59 (ERAALEELVKLQGERVRGLKQQKASAELIEEEVAKLLKLKAQLGPDESKQKFVLKTP). Serine 66 carries the post-translational modification Phosphoserine. Residues 130–132 (DLT), arginine 157, glutamine 173, aspartate 177, arginine 326, and 330–331 (YY) each bind L-histidine. Serine 356 is subject to Phosphoserine.

It belongs to the class-II aminoacyl-tRNA synthetase family. As to quaternary structure, homodimer.

The protein resides in the cytoplasm. The catalysed reaction is tRNA(His) + L-histidine + ATP = L-histidyl-tRNA(His) + AMP + diphosphate + H(+). In terms of biological role, catalyzes the ATP-dependent ligation of histidine to the 3'-end of its cognate tRNA, via the formation of an aminoacyl-adenylate intermediate (His-AMP). Plays a role in axon guidance. This is Histidine--tRNA ligase, cytoplasmic (HARS1) from Pongo abelii (Sumatran orangutan).